Reading from the N-terminus, the 235-residue chain is Ribitol-5-phosphate cytidylyltransferase (235 aa).

CTP contacts are provided by residues 7-10, 82-88, and Ser-113; these read LAGG and GADRNTS.

This sequence belongs to the IspD/TarI cytidylyltransferase family. TarI subfamily.

The catalysed reaction is D-ribitol 5-phosphate + CTP + H(+) = CDP-L-ribitol + diphosphate. The protein operates within cell wall biogenesis; poly(ribitol phosphate) teichoic acid biosynthesis. In terms of biological role, catalyzes the transfer of the cytidylyl group of CTP to D-ribitol 5-phosphate. In Streptococcus pneumoniae (strain Hungary19A-6), this protein is Ribitol-5-phosphate cytidylyltransferase.